The sequence spans 150 residues: Large ribosomal subunit protein bL9 (150 aa).

The protein belongs to the bacterial ribosomal protein bL9 family.

Its function is as follows. Binds to the 23S rRNA. This Shewanella putrefaciens (strain CN-32 / ATCC BAA-453) protein is Large ribosomal subunit protein bL9.